We begin with the raw amino-acid sequence, 222 residues long: 2-C-methyl-D-erythritol 4-phosphate cytidylyltransferase (222 aa).

It belongs to the IspD/TarI cytidylyltransferase family. IspD subfamily.

It carries out the reaction 2-C-methyl-D-erythritol 4-phosphate + CTP + H(+) = 4-CDP-2-C-methyl-D-erythritol + diphosphate. The protein operates within isoprenoid biosynthesis; isopentenyl diphosphate biosynthesis via DXP pathway; isopentenyl diphosphate from 1-deoxy-D-xylulose 5-phosphate: step 2/6. Catalyzes the formation of 4-diphosphocytidyl-2-C-methyl-D-erythritol from CTP and 2-C-methyl-D-erythritol 4-phosphate (MEP). The polypeptide is 2-C-methyl-D-erythritol 4-phosphate cytidylyltransferase (Thermotoga maritima (strain ATCC 43589 / DSM 3109 / JCM 10099 / NBRC 100826 / MSB8)).